The primary structure comprises 99 residues: UPF0235 protein Cag_0319 (99 aa).

The protein belongs to the UPF0235 family.

In Chlorobium chlorochromatii (strain CaD3), this protein is UPF0235 protein Cag_0319.